Reading from the N-terminus, the 49-residue chain is Small, acid-soluble spore protein K (49 aa).

A disordered region spans residues 1–49 (MRNKSRGFPNMNNNKFEGEPRAKDDFASKRPDGSTNTHPQERMRASGKR). 2 stretches are compositionally biased toward basic and acidic residues: residues 16–32 (FEGE…KRPD) and 39–49 (PQERMRASGKR).

This sequence belongs to the SspK family.

The protein resides in the spore core. In Bacillus licheniformis (strain ATCC 14580 / DSM 13 / JCM 2505 / CCUG 7422 / NBRC 12200 / NCIMB 9375 / NCTC 10341 / NRRL NRS-1264 / Gibson 46), this protein is Small, acid-soluble spore protein K.